The primary structure comprises 353 residues: CCN family member 3 (353 aa).

The signal sequence occupies residues Met-1–Val-26. The IGFBP N-terminal domain occupies Arg-29–Leu-103. Disulfide bonds link Cys-33–Cys-59, Cys-37–Cys-61, Cys-41–Cys-62, Cys-48–Cys-65, Cys-73–Cys-87, and Cys-79–Cys-100. The 67-residue stretch at Asp-106 to Glu-172 folds into the VWFC domain. Residues Asn-203 to Glu-248 form the TSP type-1 domain. 5 cysteine pairs are disulfide-bonded: Cys-260/Cys-297, Cys-277/Cys-311, Cys-288/Cys-327, Cys-291/Cys-329, and Cys-296/Cys-333. The CTCK domain occupies Cys-260–Pro-334. N-linked (GlcNAc...) asparagine glycosylation occurs at Asn-276.

Belongs to the CCN family.

The protein localises to the secreted. The protein resides in the cytoplasm. Its subcellular location is the cell junction. It localises to the gap junction. Its function is as follows. Immediate-early protein likely to play a role in cell growth regulation. The polypeptide is CCN family member 3 (CCN3) (Coturnix japonica (Japanese quail)).